Here is a 320-residue protein sequence, read N- to C-terminus: ATP-dependent 6-phosphofructokinase (320 aa).

Position 12 (Gly-12) interacts with ATP. Residues Arg-22 to Arg-26 and Arg-55 to Asp-60 contribute to the ADP site. ATP contacts are provided by residues Arg-73–Phe-74 and Gly-103–Ser-106. Asp-104 is a binding site for Mg(2+). Thr-126 to Asp-128 contributes to the substrate binding site. Asp-128 acts as the Proton acceptor in catalysis. Residue Arg-155 participates in ADP binding. Substrate is bound by residues Arg-163 and Met-170–Arg-172. ADP-binding positions include Gly-186–Glu-188 and Lys-214–His-216. Substrate contacts are provided by residues Glu-223, Arg-244, and His-250–Arg-253.

It belongs to the phosphofructokinase type A (PFKA) family. ATP-dependent PFK group I subfamily. Prokaryotic clade 'B1' sub-subfamily. Homotetramer. Requires Mg(2+) as cofactor.

It is found in the cytoplasm. The enzyme catalyses beta-D-fructose 6-phosphate + ATP = beta-D-fructose 1,6-bisphosphate + ADP + H(+). It functions in the pathway carbohydrate degradation; glycolysis; D-glyceraldehyde 3-phosphate and glycerone phosphate from D-glucose: step 3/4. With respect to regulation, allosterically activated by ADP and other diphosphonucleosides, and allosterically inhibited by phosphoenolpyruvate. In terms of biological role, catalyzes the phosphorylation of D-fructose 6-phosphate to fructose 1,6-bisphosphate by ATP, the first committing step of glycolysis. The chain is ATP-dependent 6-phosphofructokinase from Baumannia cicadellinicola subsp. Homalodisca coagulata.